Consider the following 353-residue polypeptide: Tetraacyldisaccharide 4'-kinase (353 aa).

Position 66–73 (66–73 (TVGGTGKT)) interacts with ATP.

The protein belongs to the LpxK family.

The enzyme catalyses a lipid A disaccharide + ATP = a lipid IVA + ADP + H(+). It functions in the pathway glycolipid biosynthesis; lipid IV(A) biosynthesis; lipid IV(A) from (3R)-3-hydroxytetradecanoyl-[acyl-carrier-protein] and UDP-N-acetyl-alpha-D-glucosamine: step 6/6. Transfers the gamma-phosphate of ATP to the 4'-position of a tetraacyldisaccharide 1-phosphate intermediate (termed DS-1-P) to form tetraacyldisaccharide 1,4'-bis-phosphate (lipid IVA). This is Tetraacyldisaccharide 4'-kinase from Geobacter sulfurreducens (strain ATCC 51573 / DSM 12127 / PCA).